Reading from the N-terminus, the 331-residue chain is Glyceraldehyde-3-phosphate dehydrogenase, cytosolic (331 aa).

Residues 11 to 12 (RI), Asp-33, and Arg-77 each bind NAD(+). Residues 148 to 150 (SCT), Thr-179, 208 to 209 (TG), and Arg-231 each bind D-glyceraldehyde 3-phosphate. Cys-149 acts as the Nucleophile in catalysis. Asn-313 provides a ligand contact to NAD(+).

Belongs to the glyceraldehyde-3-phosphate dehydrogenase family. In terms of assembly, homotetramer.

The protein resides in the cytoplasm. It carries out the reaction D-glyceraldehyde 3-phosphate + phosphate + NAD(+) = (2R)-3-phospho-glyceroyl phosphate + NADH + H(+). The protein operates within carbohydrate degradation; glycolysis; pyruvate from D-glyceraldehyde 3-phosphate: step 1/5. This chain is Glyceraldehyde-3-phosphate dehydrogenase, cytosolic (GAPC), found in Leishmania mexicana.